Here is a 346-residue protein sequence, read N- to C-terminus: Phosphate acyltransferase (346 aa).

This sequence belongs to the PlsX family. As to quaternary structure, homodimer. Probably interacts with PlsY.

Its subcellular location is the cytoplasm. It carries out the reaction a fatty acyl-[ACP] + phosphate = an acyl phosphate + holo-[ACP]. It functions in the pathway lipid metabolism; phospholipid metabolism. Catalyzes the reversible formation of acyl-phosphate (acyl-PO(4)) from acyl-[acyl-carrier-protein] (acyl-ACP). This enzyme utilizes acyl-ACP as fatty acyl donor, but not acyl-CoA. The polypeptide is Phosphate acyltransferase (Geotalea uraniireducens (strain Rf4) (Geobacter uraniireducens)).